The following is a 360-amino-acid chain: MLDIHNPATDHHDMRDLTIIGGGPTGIFAAFQCGMNNISCRIIESMPQLGGQLAALYPEKHIYDVAGFPEVPAIDLVESLWAQAERYNPDVVLNETVTKYTKLDDGTFETRTNTGNVYRSRAVLIAAGLGAFEPRKLPQLGNIDHLTGSSVYYAVKSVEDFKGKRVVIVGGGDSALDWTVGLIKNAASVTLVHRGHEFQGHGKTAHEVERARANGTIDVYLETEVASIEESNGVLTRVHLRSSDGSKWTVEADRLLILIGFKSNLGPLARWDLELYENALVVDSHMKTSVDGLYAAGDIAYYPGKLKIIQTGLSEATMAVRHSLSYIKPGEKIRNVFSSVKMAKEKKAAEAGNATENKAE.

Residues Thr25, Glu44, Gln52, Tyr57, Val97, Phe132, Asp298, and Ser339 each coordinate FAD.

Belongs to the ferredoxin--NADP reductase type 2 family. Homodimer. It depends on FAD as a cofactor.

It catalyses the reaction 2 reduced [2Fe-2S]-[ferredoxin] + NADP(+) + H(+) = 2 oxidized [2Fe-2S]-[ferredoxin] + NADPH. This chain is Ferredoxin--NADP reductase, found in Chlorobaculum tepidum (strain ATCC 49652 / DSM 12025 / NBRC 103806 / TLS) (Chlorobium tepidum).